A 171-amino-acid polypeptide reads, in one-letter code: T-cell surface glycoprotein CD3 delta chain (171 aa).

Positions Met1–Pro21 are cleaved as a signal peptide. The Extracellular segment spans residues Tyr22–Leu104. Cys37 and Cys72 are oxidised to a cystine. N-linked (GlcNAc...) asparagine glycosylation occurs at Asn38. The chain crosses the membrane as a helical span at residues Ala105–Phe125. The Cytoplasmic segment spans residues Ala126–Lys171. The region spanning Asp138–Asn166 is the ITAM domain. 2 positions are modified to phosphotyrosine: Tyr149 and Tyr160.

As to quaternary structure, the TCR-CD3 complex is composed of a CD3D/CD3E and a CD3G/CD3E heterodimers that preferentially associate with TCRalpha and TCRbeta, respectively, to form TCRalpha/CD3E/CD3G and TCRbeta/CD3G/CD3E trimers. In turn, the hexamer interacts with CD3Z homodimer to form the TCR-CD3 complex. Alternatively, TCRalpha and TCRbeta can be replaced by TCRgamma and TCRdelta. Interacts with coreceptors CD4 and CD8. Phosphorylated on Tyr residues after T-cell receptor triggering by LCK in association with CD4/CD8. CD3D is mostly present on T-lymphocytes with its TCR-CD3 partners. Present also in fetal NK-cells.

The protein resides in the cell membrane. Part of the TCR-CD3 complex present on T-lymphocyte cell surface that plays an essential role in adaptive immune response. When antigen presenting cells (APCs) activate T-cell receptor (TCR), TCR-mediated signals are transmitted across the cell membrane by the CD3 chains CD3D, CD3E, CD3G and CD3Z. All CD3 chains contain immunoreceptor tyrosine-based activation motifs (ITAMs) in their cytoplasmic domain. Upon TCR engagement, these motifs become phosphorylated by Src family protein tyrosine kinases LCK and FYN, resulting in the activation of downstream signaling pathways. In addition of this role of signal transduction in T-cell activation, CD3D plays an essential role in thymocyte differentiation. Indeed, participates in correct intracellular TCR-CD3 complex assembly and surface expression. In absence of a functional TCR-CD3 complex, thymocytes are unable to differentiate properly. Interacts with CD4 and CD8 and thus serves to establish a functional link between the TCR and coreceptors CD4 and CD8, which is needed for activation and positive selection of CD4 or CD8 T-cells. The sequence is that of T-cell surface glycoprotein CD3 delta chain (CD3D) from Sus scrofa (Pig).